We begin with the raw amino-acid sequence, 932 residues long: 3-hydroxy-3-methylglutaryl-coenzyme A reductase (932 aa).

The next 6 membrane-spanning stretches (helical) occupy residues 20–40 (VIVC…FTGL), 59–79 (LSSD…YLYL), 92–112 (ILGI…SAVI), 113–133 (HLFG…LLLI), 162–182 (MAIL…VISI), and 193–213 (VFCC…MTFF). A glycan (N-linked (GlcNAc...) asparagine) is linked at asparagine 279. Residues 322 to 342 (ILTAILATVLASHYIFFSDLA) form a helical membrane-spanning segment. Residues 343 to 467 (TYPEKRVSIM…APRPMPELLE (125 aa)) form a linker region. A compositionally biased stretch (basic and acidic residues) spans 357 to 367 (VVNPGSDHEDA). The disordered stretch occupies residues 357-442 (VVNPGSDHED…SGSEDEEEEV (86 aa)). A compositionally biased stretch (polar residues) spans 374–403 (GTLSSSPSTSDVRVIESMTSRTQACQTDPV). Over residues 406–421 (SPRNSRSSSPVSSHSV) the composition is skewed to low complexity. The tract at residues 468–932 (ILNVGKGPNA…APGTCTANAS (465 aa)) is catalytic. Residues glutamate 575, lysine 707, and aspartate 783 each act as charge relay system in the active site. Asparagine 850 carries N-linked (GlcNAc...) asparagine glycosylation. Histidine 882 functions as the Proton donor in the catalytic mechanism. The N-linked (GlcNAc...) asparagine glycan is linked to asparagine 886. Serine 888 is subject to Phosphoserine; by AMPK.

It belongs to the HMG-CoA reductase family.

The protein localises to the endoplasmic reticulum membrane. The catalysed reaction is (R)-mevalonate + 2 NADP(+) + CoA = (3S)-3-hydroxy-3-methylglutaryl-CoA + 2 NADPH + 2 H(+). It participates in metabolic intermediate biosynthesis; (R)-mevalonate biosynthesis; (R)-mevalonate from acetyl-CoA: step 3/3. In terms of biological role, this transmembrane glycoprotein is involved in the control of cholesterol biosynthesis. It is the rate-limiting enzyme of sterol biosynthesis. This Strongylocentrotus purpuratus (Purple sea urchin) protein is 3-hydroxy-3-methylglutaryl-coenzyme A reductase (HMGCR).